Consider the following 218-residue polypeptide: MPPVCGRRCSRTGEIRGYSGSIVRRWKRVETRDGPRFRSSLAPHEAALLKNLAGAMIGLLDDRDSSSPSDELEEITGIKTGHAQRPGDPTLRRLLPDFYRPDDLDDDDPTAVDGSESFNAALRSLHEPEIIDAKRVAAQQLLDTVPDNGGRLELTESDANAWIAAVNDLRLALGVMLEIGPRGPERLPGNHPLAAHFNVYQWLTVLQEYLVLVLMGSR.

The short motif at 5–9 (CGRRC) is the CXXXC element. A disulfide bond links C5 and C9.

This sequence belongs to the AosR family. As to quaternary structure, homodimer. Under oxidative stress, interacts with the extracytoplasmic-function (ECF) RNA polymerase sigma factor SigH.

Its activity is regulated as follows. Activity is modulated by the formation of a disulfide bound within the N-terminal Cys-X-X-X-Cys (CXXXC) motif. This intramolecular disulfide bond is formed in response to oxidative stress, and results in oxidative stress-dependent interaction with the sigma factor SigH. Functionally, transcription factor crucial for intra-mycobacterial redox homeostasis and protection against host-derived oxidative and nitrosative radicals. In response to oxidative stress, interacts with the ECF sigma factor SigH and, in conjunction with SigH, binds to an auxiliary promoter upstream of mec-cysO-cysM, leading to the transcriptional activation of these genes encoding a non-canonical actinomycete-specific cysteine biosynthesis pathway. Increased transcription of mec-cysO-cysM results in enhanced production of L-cysteine and cysteine-derived antioxidant molecules. Increased production of cysteine protects mycobacteria cells from host phagocyte-derived oxidative and nitrosative stress, thus facilitating the mycobacterial growth in the host. This Mycobacterium bovis (strain ATCC BAA-935 / AF2122/97) protein is Oxidative stress regulator AosR.